We begin with the raw amino-acid sequence, 159 residues long: SsrA-binding protein (159 aa).

The protein belongs to the SmpB family.

Its subcellular location is the cytoplasm. Required for rescue of stalled ribosomes mediated by trans-translation. Binds to transfer-messenger RNA (tmRNA), required for stable association of tmRNA with ribosomes. tmRNA and SmpB together mimic tRNA shape, replacing the anticodon stem-loop with SmpB. tmRNA is encoded by the ssrA gene; the 2 termini fold to resemble tRNA(Ala) and it encodes a 'tag peptide', a short internal open reading frame. During trans-translation Ala-aminoacylated tmRNA acts like a tRNA, entering the A-site of stalled ribosomes, displacing the stalled mRNA. The ribosome then switches to translate the ORF on the tmRNA; the nascent peptide is terminated with the 'tag peptide' encoded by the tmRNA and targeted for degradation. The ribosome is freed to recommence translation, which seems to be the essential function of trans-translation. The polypeptide is SsrA-binding protein (Coxiella burnetii (strain CbuG_Q212) (Coxiella burnetii (strain Q212))).